Reading from the N-terminus, the 150-residue chain is Centrin-B (150 aa).

3 consecutive EF-hand domains span residues 12-46 (DQISEIKESFDMFKSDNGKLDNDQIKYAFKALGCE), 80-114 (DSMSTLEQAFKLFVKDGSGITFKDLKKVAINIGEE), and 115-150 (CSDSDLYDMIEFADTDGDGVINKSEFISLMTTKKVL). 4 residues coordinate Ca(2+): Asp128, Asp130, Asp132, and Glu139.

It belongs to the centrin family.

It is found in the cytoplasm. Its subcellular location is the cytoskeleton. The protein resides in the microtubule organizing center. It localises to the centrosome. Its function is as follows. Plays a fundamental role in microtubule-organizing center structure and function. This chain is Centrin-B (cenB), found in Dictyostelium discoideum (Social amoeba).